The sequence spans 592 residues: Beta-fructofuranosidase, insoluble isoenzyme 2 (592 aa).

Residues 1–40 form the signal peptide; it reads MLIRCFHIKMALVTCFHSMLFLSAVVFIFSLDVNIRGVEA. D75 is an active-site residue. Residues N171, N195, N310, N347, and N568 are each glycosylated (N-linked (GlcNAc...) asparagine).

This sequence belongs to the glycosyl hydrolase 32 family.

Its subcellular location is the secreted. It is found in the cell wall. The catalysed reaction is Hydrolysis of terminal non-reducing beta-D-fructofuranoside residues in beta-D-fructofuranosides.. Its function is as follows. May play an important role in phloem unloading and in stress response. This is Beta-fructofuranosidase, insoluble isoenzyme 2 (INV2) from Daucus carota (Wild carrot).